Consider the following 293-residue polypeptide: Ubiquinone biosynthesis protein COQ9-B, mitochondrial (293 aa).

Positions 21-73 are disordered; it reads LRSDDQKQPPFSSSSTHAETPEHAEEQYQQQQSPPRYTDQAGEESEDYESEEQ. The span at 29 to 38 shows a compositional bias: polar residues; the sequence is PPFSSSSTHA. Residues 61-72 show a composition bias toward acidic residues; that stretch reads AGEESEDYESEE. An a 1,2-diacylglycero-3-phosphoethanolamine-binding site is contributed by arginine 219.

Belongs to the COQ9 family. Homodimer. Heterodimer; two heterodimers of COQ7:COQ9 come together on the same side of the lipid pseudo-bilayer and form a curved tetramer with a hydrophobic surface suitable for membrane interaction. These two tetramers assemble into a soluble octamer with a pseudo-bilayer of lipids captured within. Interacts with COQ7; this interaction allows ubiquinone (CoQ) isoprene intermediates presentation to COQ7 and facilitates the COQ7-mediated hydroxylase step.

The protein localises to the mitochondrion. It functions in the pathway cofactor biosynthesis; ubiquinone biosynthesis. Its function is as follows. Membrane-associated protein that warps the membrane surface to access and bind aromatic isoprenes with high specificity, including ubiquinone (CoQ) isoprene intermediates and presents them directly to COQ7, therefore facilitating the COQ7-mediated hydroxylase step. Participates in the biosynthesis of coenzyme Q, also named ubiquinone, an essential lipid-soluble electron transporter for aerobic cellular respiration. This chain is Ubiquinone biosynthesis protein COQ9-B, mitochondrial (coq9-b), found in Xenopus laevis (African clawed frog).